A 79-amino-acid chain; its full sequence is MKTQVLALFVLCVLFCLAESRTTLNKRNDIEKRIECKCEGDAPDLSHMTGTVYFSCKGGDGSWSKCNTYTAVADCCHQA.

Positions 1–20 (MKTQVLALFVLCVLFCLAES) are cleaved as a signal peptide. Positions 21 to 31 (RTTLNKRNDIE) are excised as a propeptide. 3 cysteine pairs are disulfide-bonded: Cys36-Cys75, Cys38-Cys66, and Cys56-Cys76.

Belongs to the sea anemone sodium channel inhibitory toxin family.

The protein resides in the secreted. It is found in the nematocyst. Its function is as follows. In neuromuscular preparation of crustaceans, the toxin increased neurotransmitter release, causing repetitive firing of the axons. May affect sodium channels (Nav). In Calliactis parasitica (Sea anemone), this protein is Delta-hormotoxin-Cpt1b.